A 163-amino-acid polypeptide reads, in one-letter code: SsrA-binding protein (163 aa).

The protein belongs to the SmpB family.

It is found in the cytoplasm. Its function is as follows. Required for rescue of stalled ribosomes mediated by trans-translation. Binds to transfer-messenger RNA (tmRNA), required for stable association of tmRNA with ribosomes. tmRNA and SmpB together mimic tRNA shape, replacing the anticodon stem-loop with SmpB. tmRNA is encoded by the ssrA gene; the 2 termini fold to resemble tRNA(Ala) and it encodes a 'tag peptide', a short internal open reading frame. During trans-translation Ala-aminoacylated tmRNA acts like a tRNA, entering the A-site of stalled ribosomes, displacing the stalled mRNA. The ribosome then switches to translate the ORF on the tmRNA; the nascent peptide is terminated with the 'tag peptide' encoded by the tmRNA and targeted for degradation. The ribosome is freed to recommence translation, which seems to be the essential function of trans-translation. The polypeptide is SsrA-binding protein (Shewanella sp. (strain ANA-3)).